The following is a 342-amino-acid chain: Phosphate acyltransferase (342 aa).

The protein belongs to the PlsX family. As to quaternary structure, homodimer. Probably interacts with PlsY.

Its subcellular location is the cytoplasm. It carries out the reaction a fatty acyl-[ACP] + phosphate = an acyl phosphate + holo-[ACP]. It functions in the pathway lipid metabolism; phospholipid metabolism. In terms of biological role, catalyzes the reversible formation of acyl-phosphate (acyl-PO(4)) from acyl-[acyl-carrier-protein] (acyl-ACP). This enzyme utilizes acyl-ACP as fatty acyl donor, but not acyl-CoA. The chain is Phosphate acyltransferase from Blochmanniella pennsylvanica (strain BPEN).